The primary structure comprises 582 residues: MTRLIRSKKQFLIRSLHSVFYYLGSLLHSTFEMNVFIGLLLATVVASQSSEGRDESYTYKQLCIVDDKPQVLDGFDCRNQVAVARWQNAVNTTGWTFLEVETKENYCPQLQAYSAGYLEGLLSKTVLTYHLKNAQEDYCKNFTGYCSRLSDFLTENQKWIQSSLETVAPDDLYWGAVNRTYHQVSGLIDAYEGREFKPRITYELHPILYLNLNGDFYDLEKKLNKTRDPAFEQTGGKCSGLIKVAPGNADLFISQVTMSGFQNMLRVIKLYKFGYDRQFYPGYASSFSSYPGLLYSSDDFALQTSGLAVIETTISVFNTSLFENTKPVGQLPTWIRAIVSNQLARDAREWCKLYSLYNSGTYNNQWAVLDYKKFKPNQPLPKNGLFYVLEQMPGKIVYSDLTWFVEKYSYFPSYNIPFFKEITEISGFIGQAAKMGDWFKWGASPRAKIFERDHGNVHDLDSLTALMRYNDYKNDEFSKCKCNPPYSAEAGISARGDLNPANGTYEFPGQGHVNHGALDYKGTNVELMKKLQFVAQGGPTWGKVPSFKWSEFDFKDKVNHVGHPDEWKFNTLVHKWETEINA.

The signal sequence occupies residues 1–42 (MTRLIRSKKQFLIRSLHSVFYYLGSLLHSTFEMNVFIGLLLA). N-linked (GlcNAc...) asparagine glycosylation is found at asparagine 91, asparagine 141, asparagine 178, asparagine 224, and asparagine 318. An intrachain disulfide couples cysteine 139 to cysteine 146. Residues cysteine 480 and cysteine 482 are joined by a disulfide bond. N-linked (GlcNAc...) asparagine glycosylation is present at asparagine 502.

It belongs to the phospholipase B-like family.

Its subcellular location is the secreted. Functionally, putative phospholipase. This Caenorhabditis elegans protein is Putative phospholipase B-like 2.